The following is a 177-amino-acid chain: MADFQEQLRQYRAQKRRKETVDNFKDKLRRFWMLGTGANKDTTIEVQQVPTKFEAISENSQDEAVTSSESELVPEEQPTRSTDHHHKENNCLKYTLWTVYLLFWITLYVIAIKLSFGLVFLMFSALFGIYFNTRTEPKKRNEMSAYSVFNKNCESIDGTLKAEQFEREIRYGSGSVR.

Residues 1–100 are Cytoplasmic-facing; it reads MADFQEQLRQ…CLKYTLWTVY (100 aa). A compositionally biased stretch (polar residues) spans 57 to 70; sequence SENSQDEAVTSSES. A disordered region spans residues 57–85; sequence SENSQDEAVTSSESELVPEEQPTRSTDHH. The segment at residues 101–121 is an intramembrane region (helical); sequence LLFWITLYVIAIKLSFGLVFL. Topologically, residues 122 to 177 are cytoplasmic; it reads MFSALFGIYFNTRTEPKKRNEMSAYSVFNKNCESIDGTLKAEQFEREIRYGSGSVR.

The protein belongs to the SAYSD1 family.

Its subcellular location is the endoplasmic reticulum membrane. Its function is as follows. Ufmylation 'reader' component of a translocation-associated quality control pathway, a mechanism that takes place when a ribosome has stalled during translation, and which is required to degrade clogged substrates. Specifically recognizes and binds ufmylated ribosomes when a ribosome has stalled, promoting the transport of stalled nascent chain to lysosomes for degradation. This is SAYSvFN domain-containing protein 1 from Drosophila melanogaster (Fruit fly).